The sequence spans 50 residues: Defensin D4 (50 aa).

4 cysteine pairs are disulfide-bonded: Cys3–Cys50, Cys14–Cys35, Cys20–Cys44, and Cys24–Cys46.

Detected in seeds (at protein level).

It is found in the secreted. Functionally, antimicrobial peptide with antifungal activity. The sequence is that of Defensin D4 from Nigella sativa (Black cumin).